The chain runs to 390 residues: Lipoyl synthase, mitochondrial (390 aa).

The N-terminal 19 residues, 1 to 19 (MPTLLRILRPPRSPFTRCL), are a transit peptide targeting the mitochondrion. Positions 23–48 (ATPSSSGSSSRSKFTESLETGPGLDD) are disordered. C98, C103, C109, C136, C140, C143, and S350 together coordinate [4Fe-4S] cluster. Residues 119-339 (AEGRSAATAT…KEVAENLGFL (221 aa)) form the Radical SAM core domain.

Belongs to the radical SAM superfamily. Lipoyl synthase family. [4Fe-4S] cluster is required as a cofactor.

It is found in the mitochondrion. The catalysed reaction is [[Fe-S] cluster scaffold protein carrying a second [4Fe-4S](2+) cluster] + N(6)-octanoyl-L-lysyl-[protein] + 2 oxidized [2Fe-2S]-[ferredoxin] + 2 S-adenosyl-L-methionine + 4 H(+) = [[Fe-S] cluster scaffold protein] + N(6)-[(R)-dihydrolipoyl]-L-lysyl-[protein] + 4 Fe(3+) + 2 hydrogen sulfide + 2 5'-deoxyadenosine + 2 L-methionine + 2 reduced [2Fe-2S]-[ferredoxin]. The protein operates within protein modification; protein lipoylation via endogenous pathway; protein N(6)-(lipoyl)lysine from octanoyl-[acyl-carrier-protein]: step 2/2. Catalyzes the radical-mediated insertion of two sulfur atoms into the C-6 and C-8 positions of the octanoyl moiety bound to the lipoyl domains of lipoate-dependent enzymes, thereby converting the octanoylated domains into lipoylated derivatives. This Laccaria bicolor (strain S238N-H82 / ATCC MYA-4686) (Bicoloured deceiver) protein is Lipoyl synthase, mitochondrial.